Here is a 438-residue protein sequence, read N- to C-terminus: Putative metabolite transport protein HI_0281 (438 aa).

Residues 1–17 (MSTQLRNNPMKVALASM) lie on the Cytoplasmic side of the membrane. The chain crosses the membrane as a helical span at residues 18–38 (VGTAIEFFDYYIYAAAAVLVF). At 39–52 (NTQFFHSDDPLSND) the chain is on the periplasmic side. The helical transmembrane segment at 53–73 (LLSLSTLALAFFARPIGSALF) threads the bilayer. Residues 74-85 (GHFGDKIGRKKT) are Cytoplasmic-facing. Residues 86–106 (LVASLVLMGGSTVVIGLLPNY) form a helical membrane-spanning segment. Residues 107–115 (AQIGIWAPI) are Periplasmic-facing. The chain crosses the membrane as a helical span at residues 116–136 (LLCVCRVGQGIGLGGEWGGAA). Topologically, residues 137-156 (LVATENAPEGKRAWYGTFPQ) are cytoplasmic. The chain crosses the membrane as a helical span at residues 157-177 (LGAPIGLFVANGTFFLVSYLL). At 178–181 (GHNA) the chain is on the periplasmic side. A helical membrane pass occupies residues 182–202 (LVEWAWRIPFVSSILLVAVGL). The Cytoplasmic segment spans residues 203 to 239 (YVRLTLHESHVFVEAEQKGKKLNAPVSVVFTKHLKPM). A helical transmembrane segment spans residues 240–260 (VIGTFIMVATYSLFYIMTAFA). At 261 to 286 (QAYSRTAPKLSEAGYALGLGIPANTF) the chain is on the periplasmic side. The chain crosses the membrane as a helical span at residues 287-307 (TGLLLISAIVFGIFISISGFY). The Cytoplasmic portion of the chain corresponds to 308-314 (ADKIGRR). Residues 315–336 (KWLIWVTIAIGVLGLAMPLFLE) traverse the membrane as a helical segment. Over 337–342 (NGTPVS) the chain is Periplasmic. A helical transmembrane segment spans residues 343–363 (VFAFLVIGMAIMGMTFGPMAA). At 364 to 377 (LLPELFPTEVRYSG) the chain is on the cytoplasmic side. The chain crosses the membrane as a helical span at residues 378–398 (ASLAYNLASIIGATIAAMISL). Residues 399–405 (KINASFG) are Periplasmic-facing. Residues 406–426 (VMGVGIYLAINALMTFLALLA) form a helical membrane-spanning segment. The Cytoplasmic portion of the chain corresponds to 427–438 (SKETKNVDLTEI).

Belongs to the major facilitator superfamily. Sugar transporter (TC 2.A.1.1) family.

Its subcellular location is the cell inner membrane. The chain is Putative metabolite transport protein HI_0281 from Haemophilus influenzae (strain ATCC 51907 / DSM 11121 / KW20 / Rd).